A 487-amino-acid chain; its full sequence is Histamine H1 receptor (487 aa).

The Extracellular segment spans residues 1–29 (MSLPNSSCLLEDKMCESNKTTMASPQLMP). Residues Asn5 and Asn18 are each glycosylated (N-linked (GlcNAc...) asparagine). The chain crosses the membrane as a helical span at residues 30–50 (LVVVLSTICLVTVGLNLLVLY). The Cytoplasmic portion of the chain corresponds to 51–64 (AVRSERKLHTVGNL). Residues 65-89 (YIVSLSVADLIVGAVVMPMNILYLL) form a helical membrane-spanning segment. The Extracellular segment spans residues 90 to 97 (MSKWSLGR). The chain crosses the membrane as a helical span at residues 98–123 (PLCLFWLSMDYVASTASIFSVFILCI). Residues Cys100 and Cys180 are joined by a disulfide bond. Histamine contacts are provided by Asp107 and Thr112. The interval 107-112 (DYVAST) is important for agonist binding. Residues 124 to 144 (DRYRSVQQPLRYLKYRTKTRA) are Cytoplasmic-facing. Residues Thr140 and Thr142 each carry the phosphothreonine modification. Residues 145–164 (SATILGAWFLSFLWVIPILG) form a helical membrane-spanning segment. Over 165-188 (WNHFMQQTSVRREDKCETDFYDVT) the chain is Extracellular. A helical transmembrane segment spans residues 189–211 (WFKVMTAIINFYLPTLLMLWFYA). Position 198 (Asn198) interacts with histamine. The Cytoplasmic portion of the chain corresponds to 212-416 (KIYKAVRQHC…MNRERKAAKQ (205 aa)). Ser230 carries the post-translational modification Phosphoserine. The span at 238–261 (KLRPENPKGDAKKPGKESPWEVLK) shows a compositional bias: basic and acidic residues. Positions 238-292 (KLRPENPKGDAKKPGKESPWEVLKRKPKDAGGGSVLKSPSQTPKEMKSPVVFSQE) are disordered. Thr279 is subject to Phosphothreonine. 2 positions are modified to phosphoserine: Ser344 and Ser347. The segment at 345–377 (EISEDQMLGDSQSFSRTDSDTTTETASGKGKLR) is disordered. Residues 353–370 (GDSQSFSRTDSDTTTETA) show a composition bias toward polar residues. A phosphoserine mark is found at Ser380, Ser396, and Ser398. A helical membrane pass occupies residues 417–440 (LGFIMAAFILCWIPYFIFFMVIAF). Positions 424–428 (FILCW) are important for agonist binding. Tyr431 serves as a coordination point for histamine. Cysteines 441 and 444 form a disulfide. Residues 441–446 (CKNCCN) are Extracellular-facing. A helical membrane pass occupies residues 447–469 (EHLHMFTIWLGYINSTLNPLIYP). At 470–487 (LCNENFKKTFKRILHIRS) the chain is on the cytoplasmic side.

The protein belongs to the G-protein coupled receptor 1 family. In terms of processing, phosphorylation at sites in the second and third cytoplasmic loops independently contribute to agonist-induced receptor down-regulation.

It is found in the cell membrane. Functionally, G-protein-coupled receptor for histamine, a biogenic amine that functions as an immune modulator and a neurotransmitter. Through the H1 receptor, histamine mediates the contraction of smooth muscles and increases capillary permeability due to contraction of terminal venules. Also mediates neurotransmission in the central nervous system and thereby regulates circadian rhythms, emotional and locomotor activities as well as cognitive functions. The protein is Histamine H1 receptor of Gorilla gorilla gorilla (Western lowland gorilla).